The chain runs to 332 residues: Transaldolase (332 aa).

Catalysis depends on Lys135, which acts as the Schiff-base intermediate with substrate.

The protein belongs to the transaldolase family. Type 1 subfamily. Homodimer.

The protein resides in the cytoplasm. It catalyses the reaction D-sedoheptulose 7-phosphate + D-glyceraldehyde 3-phosphate = D-erythrose 4-phosphate + beta-D-fructose 6-phosphate. Its pathway is carbohydrate degradation; pentose phosphate pathway; D-glyceraldehyde 3-phosphate and beta-D-fructose 6-phosphate from D-ribose 5-phosphate and D-xylulose 5-phosphate (non-oxidative stage): step 2/3. Functionally, transaldolase is important for the balance of metabolites in the pentose-phosphate pathway. The chain is Transaldolase from Prochlorococcus marinus (strain NATL2A).